A 208-amino-acid chain; its full sequence is Thymidylate kinase (208 aa).

Residue 12–19 (GVDGAGKS) participates in ATP binding.

The protein belongs to the thymidylate kinase family.

It carries out the reaction dTMP + ATP = dTDP + ADP. In terms of biological role, phosphorylation of dTMP to form dTDP in both de novo and salvage pathways of dTTP synthesis. This is Thymidylate kinase from Bordetella bronchiseptica (strain ATCC BAA-588 / NCTC 13252 / RB50) (Alcaligenes bronchisepticus).